Consider the following 690-residue polypeptide: Protein arginine N-methyltransferase 7 (690 aa).

SAM-dependent MTase PRMT-type domains follow at residues 14–357 (QNSW…YSLW) and 366–690 (TKSV…QKKL).

Belongs to the class I-like SAM-binding methyltransferase superfamily. Protein arginine N-methyltransferase family. PRMT7 subfamily.

In terms of biological role, essential arginine methyltransferase that can both catalyze the formation of omega-N monomethylarginine (MMA) and symmetrical dimethylarginine (sDMA). Specifically mediates the symmetrical dimethylation of arginine residues in the small nuclear ribonucleoproteins SmD1 and SmD3. This chain is Protein arginine N-methyltransferase 7 (Art7), found in Drosophila erecta (Fruit fly).